A 220-amino-acid polypeptide reads, in one-letter code: Octanoyltransferase (220 aa).

The region spanning 27–208 (PGTADEIWLC…QLARAHGHAV (182 aa)) is the BPL/LPL catalytic domain. Substrate-binding positions include 66–73 (RGGQVTYH), 139–141 (ALG), and 152–154 (GLA). Residue C170 is the Acyl-thioester intermediate of the active site.

It belongs to the LipB family.

The protein resides in the cytoplasm. The catalysed reaction is octanoyl-[ACP] + L-lysyl-[protein] = N(6)-octanoyl-L-lysyl-[protein] + holo-[ACP] + H(+). It participates in protein modification; protein lipoylation via endogenous pathway; protein N(6)-(lipoyl)lysine from octanoyl-[acyl-carrier-protein]: step 1/2. In terms of biological role, catalyzes the transfer of endogenously produced octanoic acid from octanoyl-acyl-carrier-protein onto the lipoyl domains of lipoate-dependent enzymes. Lipoyl-ACP can also act as a substrate although octanoyl-ACP is likely to be the physiological substrate. The protein is Octanoyltransferase of Bordetella parapertussis (strain 12822 / ATCC BAA-587 / NCTC 13253).